An 810-amino-acid polypeptide reads, in one-letter code: Phenylalanine--tRNA ligase beta subunit (810 aa).

In terms of domain architecture, tRNA-binding spans 39–154; it reads APPTEKIVVG…EGTPVGQDIR (116 aa). The region spanning 405-480 is the B5 domain; that stretch reads PQRAPVSMRA…RIYGFEKIPA (76 aa). Mg(2+) contacts are provided by aspartate 458, aspartate 464, glutamate 467, and glutamate 468. The FDX-ACB domain maps to 707-809; it reads SKFPPVRRDI…MARVYGARLR (103 aa).

It belongs to the phenylalanyl-tRNA synthetase beta subunit family. Type 1 subfamily. Tetramer of two alpha and two beta subunits. Mg(2+) serves as cofactor.

It is found in the cytoplasm. The catalysed reaction is tRNA(Phe) + L-phenylalanine + ATP = L-phenylalanyl-tRNA(Phe) + AMP + diphosphate + H(+). The polypeptide is Phenylalanine--tRNA ligase beta subunit (Burkholderia mallei (strain ATCC 23344)).